We begin with the raw amino-acid sequence, 346 residues long: E3 ubiquitin-protein ligase MARCHF9 (346 aa).

Disordered stretches follow at residues 20–39 (GGGRPRAEPQPRGGRGGGCG) and 47–92 (STRD…PGAL). Positions 63–75 (PRARGLAGDKEPR) are enriched in basic and acidic residues. Over residues 77 to 90 (GPLPPPAPPLPPPG) the composition is skewed to pro residues. The RING-CH-type zinc-finger motif lies at 102 to 162 (DSGLRTPQCR…ELCYFKYQVL (61 aa)). Zn(2+)-binding residues include Cys-110, Cys-113, Cys-126, Cys-128, His-136, Cys-139, Cys-152, and Cys-155. 2 helical membrane passes run 185 to 205 (IAAIVLGSLFLVASISWLIWS) and 219 to 239 (LFQICYGMYGFMDVVCIGLII). 2 disordered regions span residues 273–301 (DAGGGTAGKSGPRNSRTGPTSGATSRPPA) and 326–346 (PPDARSSSHSGREVVMRVTTV). The span at 284-296 (PRNSRTGPTSGAT) shows a compositional bias: polar residues.

In terms of assembly, homodimer. As to expression, ubiquitously expressed.

It is found in the golgi apparatus membrane. The protein localises to the lysosome membrane. It carries out the reaction S-ubiquitinyl-[E2 ubiquitin-conjugating enzyme]-L-cysteine + [acceptor protein]-L-lysine = [E2 ubiquitin-conjugating enzyme]-L-cysteine + N(6)-ubiquitinyl-[acceptor protein]-L-lysine.. It participates in protein modification; protein ubiquitination. In terms of biological role, E3 ubiquitin-protein ligase that may mediate ubiquitination of MHC-I, CD4 and ICAM1, and promote their subsequent endocytosis and sorting to lysosomes via multivesicular bodies. E3 ubiquitin ligases accept ubiquitin from an E2 ubiquitin-conjugating enzyme in the form of a thioester and then directly transfer the ubiquitin to targeted substrates. The sequence is that of E3 ubiquitin-protein ligase MARCHF9 from Homo sapiens (Human).